Consider the following 784-residue polypeptide: MTDAQTAAERIARLRSEIDEHNYRYYVLDAPSVPDAEYDRLFNELKALEAEHPELVTPESPTQRVGGEALAAFGQVRHELPMLSLGNAFAEEDLLDFDRNVCKGLDRGIEVVEYSCEPKLDGLAVSLLYEDGQLVRGATRGDGSTGEDITANVRTVRNIPLRLHGQGWPAVLEVRGEIYMPRAGFEALNARAIENGGKTFANPRNAAAGSLRQLDPKITAGRPLEFCGYGIGRFEGAEVPQTHTSLLETLRRWGLPISRELQLARSVQDCLAYYRAIGERRQGLAYDIDGVVFKVNRLDWQRELGFRARTPHWAIAYKFPAQEELTELLGVEFQVGRTGAITPVARLKPVQVAGVTVSNASLHNMDEVARLGVMIGDTVIVRRAGDVIPQIMQVVGERRPADARPVEVPRQCPVCGSAVERTQLVKRGKGRASLSEGAIYRCVGRLACQAQLKQAIVHFVSRRAMDIDGLGERIVEQLVDTGLVKSPADLYILTFEQLVVLDGFAEVSSNNLLAAIAASRRPSLARFIYALGIPDVGEETAKRLARALGSLTRIEKALPEVLIWLPDVGLEVAHEIHSFFRDEHNLTVIGQLLARGVELQEEGELHAEFAACASLGELLDKLDIPGIAATGAKKLAEAAGSLEAVIGLSQDWLTLNTTKGLSEKARQALREFFAVPANVEHARAIEGQLREFGMHWESERRCAEGLPLAGQTWVLTGTLESMSREQGKARLESLGAKVAGSVSAKTACVVAGPGAGSKLAKAGELGVKVLDEEAFLALLRQLES.

NAD(+) contacts are provided by residues Asp35–Asp39, Ser84–Leu85, and Glu117. Residue Lys119 is the N6-AMP-lysine intermediate of the active site. 4 residues coordinate NAD(+): Arg140, Glu177, Lys294, and Lys318. The Zn(2+) site is built by Cys412, Cys415, Cys442, and Cys448. The region spanning Ala703 to Ser784 is the BRCT domain.

Belongs to the NAD-dependent DNA ligase family. LigA subfamily. The cofactor is Mg(2+). Mn(2+) serves as cofactor.

The catalysed reaction is NAD(+) + (deoxyribonucleotide)n-3'-hydroxyl + 5'-phospho-(deoxyribonucleotide)m = (deoxyribonucleotide)n+m + AMP + beta-nicotinamide D-nucleotide.. Its function is as follows. DNA ligase that catalyzes the formation of phosphodiester linkages between 5'-phosphoryl and 3'-hydroxyl groups in double-stranded DNA using NAD as a coenzyme and as the energy source for the reaction. It is essential for DNA replication and repair of damaged DNA. This is DNA ligase from Azotobacter vinelandii (strain DJ / ATCC BAA-1303).